The chain runs to 266 residues: Maltodextrose utilization protein MalA (266 aa).

Functionally, has a role in maltotetraose utilization. This chain is Maltodextrose utilization protein MalA (malA), found in Streptococcus pneumoniae (strain ATCC BAA-255 / R6).